Here is a 64-residue protein sequence, read N- to C-terminus: Large ribosomal subunit protein bL35 (64 aa).

A disordered region spans residues 1–44; sequence MPKLKTNRGAAKRFKVKASGRISRARSNHSHILTKKDPKRKRRL. The span at 10 to 44 shows a compositional bias: basic residues; sequence AAKRFKVKASGRISRARSNHSHILTKKDPKRKRRL.

It belongs to the bacterial ribosomal protein bL35 family.

The sequence is that of Large ribosomal subunit protein bL35 from Halorhodospira halophila (strain DSM 244 / SL1) (Ectothiorhodospira halophila (strain DSM 244 / SL1)).